A 360-amino-acid chain; its full sequence is Probable ribonucleoside-diphosphate reductase small subunit 376L (360 aa).

Residues Asp-67, Glu-98, and His-101 each coordinate Fe cation. Tyr-105 is a catalytic residue. Fe cation is bound by residues Glu-172, Glu-206, and His-209.

It belongs to the ribonucleoside diphosphate reductase small chain family. In terms of assembly, heterotetramer composed of a homodimer of the large subunit (R1) and a homodimer of the small subunit (R2). Larger multisubunit protein complex are also active, composed of (R1)n(R2)n. Requires Fe cation as cofactor.

It carries out the reaction a 2'-deoxyribonucleoside 5'-diphosphate + [thioredoxin]-disulfide + H2O = a ribonucleoside 5'-diphosphate + [thioredoxin]-dithiol. In terms of biological role, ribonucleoside-diphosphate reductase holoenzyme provides the precursors necessary for viral DNA synthesis. Allows virus growth in non-dividing cells. Catalyzes the biosynthesis of deoxyribonucleotides from the corresponding ribonucleotides. The chain is Probable ribonucleoside-diphosphate reductase small subunit 376L from Acheta domesticus (House cricket).